A 547-amino-acid polypeptide reads, in one-letter code: GMP synthase [glutamine-hydrolyzing] (547 aa).

Positions lysine 12–aspartate 210 constitute a Glutamine amidotransferase type-1 domain. Catalysis depends on cysteine 89, which acts as the Nucleophile. Catalysis depends on residues histidine 184 and glutamate 186. Residues tryptophan 211 to arginine 403 enclose the GMPS ATP-PPase domain. Serine 238–serine 244 serves as a coordination point for ATP.

Homodimer.

The catalysed reaction is XMP + L-glutamine + ATP + H2O = GMP + L-glutamate + AMP + diphosphate + 2 H(+). The protein operates within purine metabolism; GMP biosynthesis; GMP from XMP (L-Gln route): step 1/1. In terms of biological role, catalyzes the synthesis of GMP from XMP. The sequence is that of GMP synthase [glutamine-hydrolyzing] from Burkholderia pseudomallei (strain 1710b).